Here is a 1067-residue protein sequence, read N- to C-terminus: MESVSQLVSNCASRGIPAQQFLNFYHELINEKYGASLNAGNEERESESRKQVFEDVSRELVQAFHSSEDAILLAEYMVHLLFINYDTYLSSALLPQVYSIQSETLLMHFHSLAASFIGKLEDKLIKEQMRQDLSTFILSSCLQCDMSTFNNQLFISIVKYLQALLTLIDDSIDIEMDKDNLKLAVTSLLTRTTKLNRILGKRIGREFETKLNLSLSAKLAMVNSPQIFSPSSGATRFAGTPGSTKPMDLALSATSSTSNKIQDLKLIRFYKNLWLNNKIHHFNTSDSQLLEKFSSINSRLSSSLAEEHLIQEQITDLIETTYTSFAQLVNNKLYHQTNTNFNLLERKYVHFITKRLPLIIKDFLPQNPSVIVNSLQNIDEKVKKAIKSYYSNKNDSPERNEDLFDDYSGNNFDIRHDFLKNLIMLNLRPPSVLNEFLREDQMVDVKTLKTDDSLVIVNSQGVQEKVSDVQEALKSLIADLDIENQYVANGNNYRFSPDNALLKLLMSFDTIAPTKQVEIANAFLQILQKATDTSDLKTLGKVLWILTSNVGHSTTSMLCCISPGPFINAVVKFLEKQQRNSTVSSSDEPDFDSLHSYVTYGMALSFVVFLKTTYDFDIEPFIQNFEESYTLKFLSSIEDISDIFVLQNESAEGSKLYLQNWLRDLFINGSISDSQMKNTNVKDLINLIPFIFKQSVIAVQAGVVSNILNLTSGFEYFLQPFLMPGLIKIMFWLEYYLHSLKNNNPPSQILSSCWELINILICPPSLDDDAKGLHFMILKLNCVRLLNVLYLFRNDESNSSQYGVYAAHESIDPKLEAVISKLEYIASISNIYDVDTKCYETTKEVYSHGTLFSNKIPVTNEHPIDIIMTNQLNSFWNLHSSTYYNYDYLLELIKLITPEKFLVDSIRTLTYKVAAYGIPGVQGKLNTSAIEQVANFLAYFMILHDVQTEEQRLALLNYIESGVIVSKETETKQEPETKLDDDFDMLFGEPFNNTLDETSLVFSQNEQPKSYSSSVFPVLHDTFGVVIAEMKKRYDTSKNNGLLSEAAYENATTFIRKYVENLKNSVV.

This sequence belongs to the Mediator complex subunit 5 family. As to quaternary structure, component of the Mediator complex.

It localises to the nucleus. Component of the Mediator complex, a coactivator involved in the regulated transcription of nearly all RNA polymerase II-dependent genes. Mediator functions as a bridge to convey information from gene-specific regulatory proteins to the basal RNA polymerase II transcription machinery. Mediator is recruited to promoters by direct interactions with regulatory proteins and serves as a scaffold for the assembly of a functional preinitiation complex with RNA polymerase II and the general transcription factors. The polypeptide is Mediator of RNA polymerase II transcription subunit 5 (NUT1) (Kluyveromyces lactis (strain ATCC 8585 / CBS 2359 / DSM 70799 / NBRC 1267 / NRRL Y-1140 / WM37) (Yeast)).